The following is a 115-amino-acid chain: NADH-ubiquinone oxidoreductase chain 3 (115 aa).

Transmembrane regions (helical) follow at residues leucine 3–tryptophan 23, phenylalanine 55–leucine 75, and valine 87–isoleucine 107.

This sequence belongs to the complex I subunit 3 family. As to quaternary structure, core subunit of respiratory chain NADH dehydrogenase (Complex I) which is composed of 45 different subunits. Interacts with TMEM186. Interacts with TMEM242.

It is found in the mitochondrion inner membrane. The catalysed reaction is a ubiquinone + NADH + 5 H(+)(in) = a ubiquinol + NAD(+) + 4 H(+)(out). Its function is as follows. Core subunit of the mitochondrial membrane respiratory chain NADH dehydrogenase (Complex I) which catalyzes electron transfer from NADH through the respiratory chain, using ubiquinone as an electron acceptor. Essential for the catalytic activity of complex I. This chain is NADH-ubiquinone oxidoreductase chain 3, found in Dugong dugon (Dugong).